The sequence spans 321 residues: Queuosine 5'-phosphate N-glycosylase/hydrolase (321 aa).

Positions 227, 229, and 296 each coordinate queuine. Catalysis depends on aspartate 229, which acts as the Nucleophile or transition state stabilizer.

Belongs to the QNG1 protein family.

It catalyses the reaction queuosine 5'-phosphate + H2O = queuine + D-ribose 5-phosphate. Functionally, catalyzes the hydrolysis of queuosine 5'-phosphate, releasing the nucleobase queuine (q). Is required for salvage of queuine from exogenous queuosine (Q) that is imported and then converted to queuosine 5'-phosphate intracellularly. The polypeptide is Queuosine 5'-phosphate N-glycosylase/hydrolase (Dictyostelium discoideum (Social amoeba)).